The following is a 147-amino-acid chain: Methylated-DNA--protein-cysteine methyltransferase (147 aa).

The active-site Nucleophile; methyl group acceptor is the C112.

Belongs to the MGMT family.

The protein localises to the cytoplasm. The catalysed reaction is a 6-O-methyl-2'-deoxyguanosine in DNA + L-cysteinyl-[protein] = S-methyl-L-cysteinyl-[protein] + a 2'-deoxyguanosine in DNA. The enzyme catalyses a 4-O-methyl-thymidine in DNA + L-cysteinyl-[protein] = a thymidine in DNA + S-methyl-L-cysteinyl-[protein]. Functionally, involved in the cellular defense against the biological effects of O6-methylguanine (O6-MeG) and O4-methylthymine (O4-MeT) in DNA. Repairs the methylated nucleobase in DNA by stoichiometrically transferring the methyl group to a cysteine residue in the enzyme. This is a suicide reaction: the enzyme is irreversibly inactivated. This Archaeoglobus fulgidus (strain ATCC 49558 / DSM 4304 / JCM 9628 / NBRC 100126 / VC-16) protein is Methylated-DNA--protein-cysteine methyltransferase.